Consider the following 79-residue polypeptide: Sec-independent protein translocase protein TatA (79 aa).

The helical transmembrane segment at 1–21 threads the bilayer; the sequence is MGEFSLTHILLLAVIFLIFFG. The interval 52–79 is disordered; it reads DIHDNQQVSHQNKQSMGQTQKQGENQNS. Polar residues predominate over residues 56–79; that stretch reads NQQVSHQNKQSMGQTQKQGENQNS.

It belongs to the TatA/E family. In terms of assembly, the Tat system comprises two distinct complexes: a TatABC complex, containing multiple copies of TatA, TatB and TatC subunits, and a separate TatA complex, containing only TatA subunits. Substrates initially bind to the TatABC complex, which probably triggers association of the separate TatA complex to form the active translocon.

It localises to the cell inner membrane. Its function is as follows. Part of the twin-arginine translocation (Tat) system that transports large folded proteins containing a characteristic twin-arginine motif in their signal peptide across membranes. TatA could form the protein-conducting channel of the Tat system. The sequence is that of Sec-independent protein translocase protein TatA from Bdellovibrio bacteriovorus (strain ATCC 15356 / DSM 50701 / NCIMB 9529 / HD100).